The following is a 380-amino-acid chain: Guanine nucleotide-binding protein subunit beta (380 aa).

WD repeat units lie at residues 64–94 (GHSGKVYSLDWTPEKNWIVSASQDGRLIVWN), 106–136 (LHCPWVMTCAFAPNGQSVACGGLDSACSIFN), 155–186 (GHKGYVSSCQYVPDQETRLITSSGDQTCVLWD), 203–234 (GHTADVLSLSINSSNSNMFVSGSCDATVRLWD), 247–277 (GHEGDINSVKFFPDGQRFGTGSDDGTCRLFD), 296–326 (NELPTVTSIAFSISGRLLFAGYSNGDCYVWD), and 342–372 (SHEGRISCLGLSSDGSALCTGSWDKNLKIWA).

It belongs to the WD repeat G protein beta family. As to quaternary structure, g proteins are composed of 3 units, alpha, beta and gamma. Interacts with the gamma subunits RGG1 and RGG2.

Its subcellular location is the cell membrane. In terms of biological role, guanine nucleotide-binding proteins (G proteins) are involved as modulators or transducers in various transmembrane signaling systems. The beta and gamma chains are required for the GTPase activity, for replacement of GDP by GTP, and for G protein-effector interaction. The protein is Guanine nucleotide-binding protein subunit beta of Oryza sativa subsp. japonica (Rice).